The primary structure comprises 516 residues: Endoglucanase 20 (516 aa).

The N-terminal stretch at 1–23 is a signal peptide; the sequence is MAAGMVATMVLLTCLAAGGLVVG. N83 carries N-linked (GlcNAc...) asparagine glycosylation. D93 functions as the Nucleophile in the catalytic mechanism. Catalysis depends on residues H416, D468, and E477.

Belongs to the glycosyl hydrolase 9 (cellulase E) family.

It localises to the secreted. It carries out the reaction Endohydrolysis of (1-&gt;4)-beta-D-glucosidic linkages in cellulose, lichenin and cereal beta-D-glucans.. The polypeptide is Endoglucanase 20 (GLU15) (Oryza sativa subsp. japonica (Rice)).